The chain runs to 183 residues: uncharacterized protein (183 aa).

The signal sequence occupies residues 1–17 (MVLFILVLYTCIQDGNG).

This is an uncharacterized protein from Saccharomyces cerevisiae (strain ATCC 204508 / S288c) (Baker's yeast).